The following is a 216-amino-acid chain: Glutathione S-transferase D5 (216 aa).

In terms of domain architecture, GST N-terminal spans 1-80 (MDFYYSPRGS…YLVEKYGKDD (80 aa)). Glutathione-binding positions include 50–52 (HTI) and 64–66 (ESR). One can recognise a GST C-terminal domain in the interval 86-207 (DPKKQALVNQ…KGAVELKGVF (122 aa)).

The protein belongs to the GST superfamily. Delta family. As to quaternary structure, homodimer.

The catalysed reaction is RX + glutathione = an S-substituted glutathione + a halide anion + H(+). Functionally, conjugation of reduced glutathione to a wide number of exogenous and endogenous hydrophobic electrophiles. May be involved in detoxification. This is Glutathione S-transferase D5 from Drosophila melanogaster (Fruit fly).